Here is a 568-residue protein sequence, read N- to C-terminus: Sulfite reductase [NADPH] hemoprotein beta-component (568 aa).

The [4Fe-4S] cluster site is built by Cys425, Cys431, Cys470, and Cys474. Position 474 (Cys474) interacts with siroheme.

Belongs to the nitrite and sulfite reductase 4Fe-4S domain family. As to quaternary structure, alpha(8)-beta(8). The alpha component is a flavoprotein, the beta component is a hemoprotein. The cofactor is siroheme. Requires [4Fe-4S] cluster as cofactor.

It carries out the reaction hydrogen sulfide + 3 NADP(+) + 3 H2O = sulfite + 3 NADPH + 4 H(+). Its pathway is sulfur metabolism; hydrogen sulfide biosynthesis; hydrogen sulfide from sulfite (NADPH route): step 1/1. Its function is as follows. Component of the sulfite reductase complex that catalyzes the 6-electron reduction of sulfite to sulfide. This is one of several activities required for the biosynthesis of L-cysteine from sulfate. The protein is Sulfite reductase [NADPH] hemoprotein beta-component of Xanthomonas campestris pv. campestris (strain ATCC 33913 / DSM 3586 / NCPPB 528 / LMG 568 / P 25).